Reading from the N-terminus, the 729-residue chain is Pentatricopeptide repeat-containing protein At5g01110 (729 aa).

The tract at residues 26 to 45 is disordered; it reads TSSSPVFEPSSSSSSSSSSA. Low complexity predominate over residues 27–45; sequence SSSPVFEPSSSSSSSSSSA. PPR repeat units follow at residues 112 to 147, 164 to 198, 199 to 233, 234 to 268, 269 to 303, 304 to 338, 339 to 373, 374 to 408, 409 to 443, 444 to 478, 479 to 513, 514 to 548, 549 to 583, 584 to 618, 619 to 649, 656 to 690, and 691 to 725; these read TSLS…GVSR, NDSV…GFTV, SIDA…GVGI, NVYT…GVYP, DIVT…GFSP, GVYT…GLSP, DSTT…DVVP, DLVC…GLIP, DNVI…GCAM, DVVT…ALFP, DSYT…RIRL, DVVT…EILP, TPIS…NIKP, TVMI…GFVP, DCIS…MEEE, DVFT…GVNP, and DRST…GFSP.

It belongs to the PPR family. P subfamily.

This is Pentatricopeptide repeat-containing protein At5g01110 from Arabidopsis thaliana (Mouse-ear cress).